Reading from the N-terminus, the 358-residue chain is Alanine racemase (358 aa).

Lys35 acts as the Proton acceptor; specific for D-alanine in catalysis. At Lys35 the chain carries N6-(pyridoxal phosphate)lysine. Position 130 (Arg130) interacts with substrate. Tyr255 (proton acceptor; specific for L-alanine) is an active-site residue. Met303 is a substrate binding site.

This sequence belongs to the alanine racemase family. Pyridoxal 5'-phosphate is required as a cofactor.

It carries out the reaction L-alanine = D-alanine. It functions in the pathway amino-acid biosynthesis; D-alanine biosynthesis; D-alanine from L-alanine: step 1/1. Catalyzes the interconversion of L-alanine and D-alanine. May also act on other amino acids. The chain is Alanine racemase (alr) from Shewanella sp. (strain W3-18-1).